The following is a 137-amino-acid chain: Small ribosomal subunit protein uS12 (137 aa).

2 disordered regions span residues methionine 1–serine 21 and valine 34–lysine 57.

It belongs to the universal ribosomal protein uS12 family. In terms of assembly, part of the 30S ribosomal subunit. Contacts proteins S8 and S17. May interact with IF1 in the 30S initiation complex.

Its function is as follows. With S4 and S5 plays an important role in translational accuracy. Interacts with and stabilizes bases of the 16S rRNA that are involved in tRNA selection in the A site and with the mRNA backbone. Located at the interface of the 30S and 50S subunits, it traverses the body of the 30S subunit contacting proteins on the other side and probably holding the rRNA structure together. The combined cluster of proteins S8, S12 and S17 appears to hold together the shoulder and platform of the 30S subunit. The sequence is that of Small ribosomal subunit protein uS12 from Streptococcus mutans serotype c (strain ATCC 700610 / UA159).